The following is a 457-amino-acid chain: tRNA modification GTPase MnmE (457 aa).

(6S)-5-formyl-5,6,7,8-tetrahydrofolate is bound by residues arginine 22, glutamate 83, and arginine 122. Residues glycine 219–phenylalanine 378 form the TrmE-type G domain. Residue asparagine 229 participates in K(+) binding. GTP-binding positions include asparagine 229–serine 234, threonine 248–threonine 254, and aspartate 273–glycine 276. Residue serine 233 participates in Mg(2+) binding. Threonine 248, isoleucine 250, and threonine 253 together coordinate K(+). Threonine 254 is a binding site for Mg(2+). A (6S)-5-formyl-5,6,7,8-tetrahydrofolate-binding site is contributed by lysine 457.

This sequence belongs to the TRAFAC class TrmE-Era-EngA-EngB-Septin-like GTPase superfamily. TrmE GTPase family. In terms of assembly, homodimer. Heterotetramer of two MnmE and two MnmG subunits. K(+) is required as a cofactor.

It is found in the cytoplasm. In terms of biological role, exhibits a very high intrinsic GTPase hydrolysis rate. Involved in the addition of a carboxymethylaminomethyl (cmnm) group at the wobble position (U34) of certain tRNAs, forming tRNA-cmnm(5)s(2)U34. The polypeptide is tRNA modification GTPase MnmE (Listeria welshimeri serovar 6b (strain ATCC 35897 / DSM 20650 / CCUG 15529 / CIP 8149 / NCTC 11857 / SLCC 5334 / V8)).